The following is a 178-amino-acid chain: ATP synthase subunit d, mitochondrial (178 aa).

Residues 149–178 form a disordered region; that stretch reads NKPTFWPHTPEEQVGYKSKEQLEAEAQGHH. The segment covering 165–178 has biased composition (basic and acidic residues); that stretch reads KSKEQLEAEAQGHH.

This sequence belongs to the ATPase d subunit family. In terms of assembly, F-type ATPases have 2 components, CF(1) - the catalytic core - and CF(0) - the membrane proton channel. CF(0) seems to have nine subunits: a, b, c, d, e, f, g, F6 and 8 (or A6L).

Its subcellular location is the mitochondrion. The protein resides in the mitochondrion inner membrane. Mitochondrial membrane ATP synthase (F(1)F(0) ATP synthase or Complex V) produces ATP from ADP in the presence of a proton gradient across the membrane which is generated by electron transport complexes of the respiratory chain. F-type ATPases consist of two structural domains, F(1) - containing the extramembraneous catalytic core, and F(0) - containing the membrane proton channel, linked together by a central stalk and a peripheral stalk. During catalysis, ATP synthesis in the catalytic domain of F(1) is coupled via a rotary mechanism of the central stalk subunits to proton translocation. Part of the complex F(0) domain and the peripheric stalk, which acts as a stator to hold the catalytic alpha(3)beta(3) subcomplex and subunit a/ATP6 static relative to the rotary elements. The protein is ATP synthase subunit d, mitochondrial of Drosophila melanogaster (Fruit fly).